Consider the following 253-residue polypeptide: Chromosome-partitioning ATPase Soj (253 aa).

ATP contacts are provided by Lys-11, Gly-12, Gly-13, Val-14, Gly-15, Lys-16, Thr-17, Thr-18, Pro-211, and Asn-213. Residue Thr-17 coordinates Mg(2+).

Belongs to the ParA family.

The enzyme catalyses ATP + H2O = ADP + phosphate + H(+). ATPase probably involved in chromosome partitioning. Cooperatively binds dsDNA, forming nucleoprotein filaments in a strictly ATP-dependent fashion. The protein is Chromosome-partitioning ATPase Soj of Treponema pallidum (strain Nichols).